We begin with the raw amino-acid sequence, 98 residues long: Aspartyl/glutamyl-tRNA(Asn/Gln) amidotransferase subunit C (98 aa).

The protein belongs to the GatC family. In terms of assembly, heterotrimer of A, B and C subunits.

It carries out the reaction L-glutamyl-tRNA(Gln) + L-glutamine + ATP + H2O = L-glutaminyl-tRNA(Gln) + L-glutamate + ADP + phosphate + H(+). The enzyme catalyses L-aspartyl-tRNA(Asn) + L-glutamine + ATP + H2O = L-asparaginyl-tRNA(Asn) + L-glutamate + ADP + phosphate + 2 H(+). Its function is as follows. Allows the formation of correctly charged Asn-tRNA(Asn) or Gln-tRNA(Gln) through the transamidation of misacylated Asp-tRNA(Asn) or Glu-tRNA(Gln) in organisms which lack either or both of asparaginyl-tRNA or glutaminyl-tRNA synthetases. The reaction takes place in the presence of glutamine and ATP through an activated phospho-Asp-tRNA(Asn) or phospho-Glu-tRNA(Gln). This chain is Aspartyl/glutamyl-tRNA(Asn/Gln) amidotransferase subunit C, found in Arthrobacter sp. (strain FB24).